The sequence spans 211 residues: Intermembrane phospholipid transport system binding protein MlaC (211 aa).

A signal peptide spans Met-1–Ala-21.

The protein belongs to the MlaC/ttg2D family. In terms of assembly, interacts with the MlaA-OmpF outer membrane complex and with the inner membrane ABC transporter complex MlaFEDB, via direct interaction with MlaD.

Its subcellular location is the periplasm. In terms of biological role, involved in a phospholipid transport pathway that maintains lipid asymmetry in the outer membrane by retrograde trafficking of phospholipids from the outer membrane to the inner membrane. May transfer phospholipid across the periplasmic space and deliver it to the MlaFEDB complex at the inner membrane. This chain is Intermembrane phospholipid transport system binding protein MlaC, found in Escherichia coli (strain K12).